The sequence spans 1045 residues: MSGPLRSERKVVGFVRDPLPKVGSLSLKSEHAQADLEHLGWRNVESLDLLWGLSGAGDPDVALNLLIRLYQALEAIGEDARNELDQEIRQDEKLRVRLFALLGGSSAVGDHLVANPLQWKLLKLDAPSREEMFQALLESVKAQPAVLEVEDFSDAHNIARDDLSTPGFYTASVTGPEAERVLKWTYRTLLTRIAAHDLAGTYPTDMRRKGGDPVPFSTVTMQLSDLADAALTAALAVAIANVYGEKPVDSALSVIAMGKCGAQELNYISDVDVVFVAEPANSKSTRTAAELIRIGSNSFFEVDAALRPEGKSGALVRSLDSHMAYYKRWAETWEFQALLKARPMTGDINLGQSYVDALSPLIWTASQRESFVTDVQAMRRRVLDNVPEDLRDRELKLGRGGLRDVEFAVQLLQMVHGRIDETLRVRSTVNALHVLVDQGYVGREDGHNLIESYEFLRLLEHRLQLERIKRTHLLPKPDDRMNMRWLARASGFTGSMEQSSAKAMERHLRKVRLQIQSLHSQLFYRPLLNSVVNLSADAIRLSPDAAKLQLAALGYLHPSRAYEHLTALASGASRKAKIQAMLLPTLMEWLSQTAEPDAGLLNYRKLSDASYDRSWFLRMLRDEGVVGQRLMRILGNSPYISELIISTPDFMKQLGDAASGPKLLATAPTQVVKAIKATVSRHESPDRAIQAARSLRRQELARIASADLLNMLTVQEVCQSLSLVWDAVLDAALDAEIRAALNDPQKPDQPLANISVIGMGRLGGAELGYGSDADVMFVCEPVAGVEEHEAVTWSIAICDSMRSRLAQPSGDPPLEVDLGLRPEGRSGAIVRTVDSYVKYYEKWGETWEIQALLRAAWVAGDRELGIKFLESIDRFRYPVDGATQAQLREVRRIKARVDNERLPRGADRNTHTKLGRGALTDIEWTVQLLTMMHAHEIPELHNTSTLEVLEVLEKHQIINPVQVQTLREAWLTATAARNALVLVRGKRLDQLPTPGPHLAQVAGASGWDPNEYQEYLENYLKVTRKSRQVVDEVFWGVDSMEQREF.

The interval 1-527 (MSGPLRSERK…LHSQLFYRPL (527 aa)) is adenylyl removase. Residues 533-1045 (NLSADAIRLS…GVDSMEQREF (513 aa)) form an adenylyl transferase region.

This sequence belongs to the GlnE family. Mg(2+) is required as a cofactor.

The enzyme catalyses [glutamine synthetase]-O(4)-(5'-adenylyl)-L-tyrosine + phosphate = [glutamine synthetase]-L-tyrosine + ADP. It catalyses the reaction [glutamine synthetase]-L-tyrosine + ATP = [glutamine synthetase]-O(4)-(5'-adenylyl)-L-tyrosine + diphosphate. In terms of biological role, involved in the regulation of glutamine synthetase GlnA, a key enzyme in the process to assimilate ammonia. When cellular nitrogen levels are high, the C-terminal adenylyl transferase (AT) inactivates GlnA by covalent transfer of an adenylyl group from ATP to specific tyrosine residue of GlnA, thus reducing its activity. Conversely, when nitrogen levels are low, the N-terminal adenylyl removase (AR) activates GlnA by removing the adenylyl group by phosphorolysis, increasing its activity. The regulatory region of GlnE binds the signal transduction protein PII (GlnB) which indicates the nitrogen status of the cell. This Corynebacterium glutamicum (strain ATCC 13032 / DSM 20300 / JCM 1318 / BCRC 11384 / CCUG 27702 / LMG 3730 / NBRC 12168 / NCIMB 10025 / NRRL B-2784 / 534) protein is Bifunctional glutamine synthetase adenylyltransferase/adenylyl-removing enzyme.